The following is a 370-amino-acid chain: Flagellar P-ring protein (370 aa).

The first 27 residues, 1-27 (MPARPIPVPLLALALAAALAVPSPAAA), serve as a signal peptide directing secretion.

The protein belongs to the FlgI family. The basal body constitutes a major portion of the flagellar organelle and consists of four rings (L,P,S, and M) mounted on a central rod.

Its subcellular location is the periplasm. It is found in the bacterial flagellum basal body. In terms of biological role, assembles around the rod to form the L-ring and probably protects the motor/basal body from shearing forces during rotation. The sequence is that of Flagellar P-ring protein from Anaeromyxobacter sp. (strain K).